We begin with the raw amino-acid sequence, 110 residues long: Nucleoid-associated protein Tola_2216 (110 aa).

Belongs to the YbaB/EbfC family. Homodimer.

It is found in the cytoplasm. It localises to the nucleoid. Its function is as follows. Binds to DNA and alters its conformation. May be involved in regulation of gene expression, nucleoid organization and DNA protection. The chain is Nucleoid-associated protein Tola_2216 from Tolumonas auensis (strain DSM 9187 / NBRC 110442 / TA 4).